A 498-amino-acid chain; its full sequence is Glycerol kinase (498 aa).

T11 is a binding site for ADP. 3 residues coordinate ATP: T11, S12, and S13. A sn-glycerol 3-phosphate-binding site is contributed by T11. R15 contributes to the ADP binding site. 4 residues coordinate sn-glycerol 3-phosphate: R81, E82, Y133, and D242. Residues R81, E82, Y133, D242, and Q243 each coordinate glycerol. ADP is bound by residues T264 and G307. The ATP site is built by T264, G307, Q311, and G412. G412 and N416 together coordinate ADP.

The protein belongs to the FGGY kinase family.

The catalysed reaction is glycerol + ATP = sn-glycerol 3-phosphate + ADP + H(+). Its pathway is polyol metabolism; glycerol degradation via glycerol kinase pathway; sn-glycerol 3-phosphate from glycerol: step 1/1. With respect to regulation, inhibited by fructose 1,6-bisphosphate (FBP). Functionally, key enzyme in the regulation of glycerol uptake and metabolism. Catalyzes the phosphorylation of glycerol to yield sn-glycerol 3-phosphate. The polypeptide is Glycerol kinase (Acidovorax ebreus (strain TPSY) (Diaphorobacter sp. (strain TPSY))).